The sequence spans 319 residues: Acetaldehyde dehydrogenase 1 (319 aa).

Cys129 functions as the Acyl-thioester intermediate in the catalytic mechanism. NAD(+)-binding positions include 160–168 (SAGPGTRAN) and Asn287.

It belongs to the acetaldehyde dehydrogenase family.

It catalyses the reaction acetaldehyde + NAD(+) + CoA = acetyl-CoA + NADH + H(+). The chain is Acetaldehyde dehydrogenase 1 from Burkholderia lata (strain ATCC 17760 / DSM 23089 / LMG 22485 / NCIMB 9086 / R18194 / 383).